An 85-amino-acid chain; its full sequence is NADH-ubiquinone oxidoreductase chain 4L (85 aa).

2 helical membrane passes run 21-41 (LLVTLLSLEFLILLLFSLLVY) and 51-71 (FIFLSVTVCEGALGFSVLVSL).

The protein belongs to the complex I subunit 4L family.

Its subcellular location is the mitochondrion membrane. It catalyses the reaction a ubiquinone + NADH + 5 H(+)(in) = a ubiquinol + NAD(+) + 4 H(+)(out). Core subunit of the mitochondrial membrane respiratory chain NADH dehydrogenase (Complex I) that is believed to belong to the minimal assembly required for catalysis. Complex I functions in the transfer of electrons from NADH to the respiratory chain. The immediate electron acceptor for the enzyme is believed to be ubiquinone. This chain is NADH-ubiquinone oxidoreductase chain 4L (ND4L), found in Artemia franciscana (Brine shrimp).